The primary structure comprises 770 residues: MEEDLKLQPDSETLTTPNSEVGAVELVKHEEENEQVEQDPGYVTPPEDGKEPVAALSEPNYLGGEDDVLLKHIARQSTIVREALKECTQTPLTVEELSRAYEANLFSPRVPPKKQPNGTCETNPRLNFYPVFAVPEALATYHIFFKNQRIPLSCRANRTRGDGLLHLKAGAHIPEIVSLEEVPKIFEGLGKDEKRAANALQKNETENQNVLVELEGDNARLAVLKRTIEVSHFAYPALNLPPKVMRSVMDQVLIKRAEPIDPQQPDLNSEDGQPVVSDDELARWLGTQDPSELQERRKMMMAAVLVTVELECLQRFFANPQTLRKVEESLHYAFRHGYVRQACKISNVELSNLISYMGILHENRLGQNVLHCTLQGEARRDYVRDCIYLFLILTWQTAMGVWQQCLEEQNLQELNKLLVRARRELWTSFDERTVARQLANLIFPERLMQTLQNGLPDFVSQSILQNFRSFVLERSGILPAMSCALPSDFVPLCYRECPPPLWSHCYLLRLANYLAHHSDLMEDSSGDGLLECHCRCNLCTPHRSLVCNTELLSETQVIGTFEIQGPEQQEGASSLKLTPALWTSAYLRKFIPEDYHAHQIKFYEDQSRPPKVPLTACVITQSQILAQLQAIQQARQEFLLKKGHGVYLDPQTGEELNTPSLSAAASCRSQKHATQGKQASHRATAIPAETTKAVGRGGDVGRQPGRGSFRRGGGGADGELGQPRRGGPRGRGGRNHRQRQGTIFQKTRSEPTSENYPAPATATMFTESQP.

2 disordered regions span residues 1 to 20 (MEEDLKLQPDSETLTTPNSE) and 30 to 49 (EEENEQVEQDPGYVTPPEDG). A compositionally biased stretch (polar residues) spans 10–19 (DSETLTTPNS). A binding to host EIF4G region spans residues 248–312 (VMDQVLIKRA…AVLVTVELEC (65 aa)). Positions 315-433 (RFFANPQTLR…ELWTSFDERT (119 aa)) constitute an RRM domain. Tyrosine 332 and tyrosine 647 each carry phosphotyrosine; by host. The segment at 661 to 770 (LSAAASCRSQ…TATMFTESQP (110 aa)) is disordered. Basic residues predominate over residues 726 to 739 (GGPRGRGGRNHRQR). Positions 742–755 (TIFQKTRSEPTSEN) are enriched in polar residues.

This sequence belongs to the adenoviridae shutoff protein family. As to quaternary structure, monomer. Interacts with hexon protein; this interaction allows chaperoning and trimerization of hexon proteins. Interacts (via N-terminus) with host initiation factor EIF4G (via C-terminus). Interacts (via RRM domain) with viral mRNAs that contain the tripartite leader; this interaction allows ribosome shunting and expression of viral late mRNAs. Post-translationally, might be cleaved by the viral protease. Phosphorylated. Tyrosine phosphorylation enhances preferential binding to tripartite leader mRNAs and allows ribosome shunting. In terms of processing, methylated. Asymmetric dimethylation by host PRMT1 of the Arg/Gly-rich region may regulate shutoff protein binding to hexon and promote the capsid assembly in the nucleus.

Its subcellular location is the host cytoplasm. Functionally, protein that inhibits host translation while promoting late viral translation by ribosome shunting. Blocks host cap-dependent translation by binding to eIF4G, displacing MKNK1 from cap initiation complexes and preventing EIF4E phosphorylation. Binds to the tripartite leader sequence of viral late mRNAs and recruits host eIF4G, PABPC1/poly-A binding protein and 40S ribosomes subunits on viral mRNAs, allowing ribosome shunting and efficient translation of late viral mRNAs even though conventional translation via ribosome scanning from the cap has been shut off in the host cell. During assembly, acts as a chaperone protein that helps hexon proteins assembly into trimers. This is Shutoff protein from Human adenovirus F serotype 40 (HAdV-40).